Reading from the N-terminus, the 159-residue chain is Phosphopantetheine adenylyltransferase (159 aa).

Position 10 (Thr10) interacts with substrate. ATP is bound by residues 10 to 11 and His18; that span reads TF. 3 residues coordinate substrate: Lys42, Met74, and Arg88. Residues 89–91, Glu99, and 124–130 each bind ATP; these read GLR and WSFISSS.

This sequence belongs to the bacterial CoaD family. Homohexamer. It depends on Mg(2+) as a cofactor.

The protein localises to the cytoplasm. It carries out the reaction (R)-4'-phosphopantetheine + ATP + H(+) = 3'-dephospho-CoA + diphosphate. The protein operates within cofactor biosynthesis; coenzyme A biosynthesis; CoA from (R)-pantothenate: step 4/5. Functionally, reversibly transfers an adenylyl group from ATP to 4'-phosphopantetheine, yielding dephospho-CoA (dPCoA) and pyrophosphate. This Klebsiella pneumoniae (strain 342) protein is Phosphopantetheine adenylyltransferase.